Here is a 342-residue protein sequence, read N- to C-terminus: S-adenosylmethionine:tRNA ribosyltransferase-isomerase (342 aa).

Belongs to the QueA family. In terms of assembly, monomer.

It is found in the cytoplasm. The enzyme catalyses 7-aminomethyl-7-carbaguanosine(34) in tRNA + S-adenosyl-L-methionine = epoxyqueuosine(34) in tRNA + adenine + L-methionine + 2 H(+). It functions in the pathway tRNA modification; tRNA-queuosine biosynthesis. In terms of biological role, transfers and isomerizes the ribose moiety from AdoMet to the 7-aminomethyl group of 7-deazaguanine (preQ1-tRNA) to give epoxyqueuosine (oQ-tRNA). The sequence is that of S-adenosylmethionine:tRNA ribosyltransferase-isomerase from Streptococcus pyogenes serotype M12 (strain MGAS2096).